We begin with the raw amino-acid sequence, 20 residues long: Unknown protein from 2D-PAGE (20 aa).

This Nicotiana tabacum (Common tobacco) protein is Unknown protein from 2D-PAGE.